The following is a 528-amino-acid chain: Ribonuclease Y (528 aa).

Residues 15–35 (SLLVFALICGSIIGYFLYSFF) traverse the membrane as a helical segment. The KH domain occupies 217–277 (NISVVNIPNE…IRREIAKKTL (61 aa)). Positions 343-436 (VLKHSLEVAF…VAIADTLSSA (94 aa)) constitute an HD domain.

It belongs to the RNase Y family.

It is found in the cell membrane. Its function is as follows. Endoribonuclease that initiates mRNA decay. This Onion yellows phytoplasma (strain OY-M) protein is Ribonuclease Y.